The following is a 427-amino-acid chain: 3-phosphoshikimate 1-carboxyvinyltransferase (427 aa).

3 residues coordinate 3-phosphoshikimate: K20, S21, and R25. Phosphoenolpyruvate is bound at residue K20. The phosphoenolpyruvate site is built by G92 and R120. Residues S166, Q168, D312, and K339 each coordinate 3-phosphoshikimate. Position 168 (Q168) interacts with phosphoenolpyruvate. Catalysis depends on D312, which acts as the Proton acceptor. Phosphoenolpyruvate contacts are provided by R343 and R385.

It belongs to the EPSP synthase family. As to quaternary structure, monomer.

It localises to the cytoplasm. It catalyses the reaction 3-phosphoshikimate + phosphoenolpyruvate = 5-O-(1-carboxyvinyl)-3-phosphoshikimate + phosphate. It functions in the pathway metabolic intermediate biosynthesis; chorismate biosynthesis; chorismate from D-erythrose 4-phosphate and phosphoenolpyruvate: step 6/7. Catalyzes the transfer of the enolpyruvyl moiety of phosphoenolpyruvate (PEP) to the 5-hydroxyl of shikimate-3-phosphate (S3P) to produce enolpyruvyl shikimate-3-phosphate and inorganic phosphate. In Streptococcus equi subsp. zooepidemicus (strain MGCS10565), this protein is 3-phosphoshikimate 1-carboxyvinyltransferase.